We begin with the raw amino-acid sequence, 140 residues long: Putative transmembrane protein 49 (140 aa).

Transmembrane regions (helical) follow at residues 23–43 (LIMS…IGGV) and 93–110 (IAVH…RYMY).

The protein localises to the host membrane. This is Putative transmembrane protein 49 (SIFV0049) from Saccharolobus islandicus (Sulfolobus islandicus).